The sequence spans 429 residues: CBL-interacting serine/threonine-protein kinase 7 (429 aa).

In terms of domain architecture, Protein kinase spans 25 to 280; that stretch reads YELGRRLGSG…IETVMKTNWF (256 aa). ATP contacts are provided by residues 31 to 39 and lysine 54; that span reads LGSGSFAKV. The active-site Proton acceptor is the aspartate 149. Positions 167–195 are activation loop; the sequence is DFGLSALPEHLQNGLLHTACGTPAYTAPE. A Phosphoserine modification is found at serine 171. Threonine 184 carries the post-translational modification Phosphothreonine. The NAF domain maps to 302–326; sequence SSVNSITAFDLISLSSGLDLSGLFE. The segment at 330-363 is PPI; it reads KKERRFTAKVSGVEVEEKAKMIGEKLGYVVKKKM.

This sequence belongs to the protein kinase superfamily. CAMK Ser/Thr protein kinase family. SNF1 subfamily. Interacts with CBL1, CBL2 and CBL3. Requires Mn(2+) as cofactor. In terms of processing, autophosphorylated. As to expression, strongly expressed in leaves, but barely expressed in roots, stems or flowers.

It catalyses the reaction L-seryl-[protein] + ATP = O-phospho-L-seryl-[protein] + ADP + H(+). The enzyme catalyses L-threonyl-[protein] + ATP = O-phospho-L-threonyl-[protein] + ADP + H(+). Functionally, CIPK serine-threonine protein kinases interact with CBL proteins. Binding of a CBL protein to the regulatory NAF domain of CIPK protein lead to the activation of the kinase in a calcium-dependent manner. Phosphorylates the rice sucrose synthase (SuSy) in vitro in an allosteric manner. Involved in cold response. The protein is CBL-interacting serine/threonine-protein kinase 7 (CIPK7) of Arabidopsis thaliana (Mouse-ear cress).